We begin with the raw amino-acid sequence, 313 residues long: Ribosomal protein L11 methyltransferase (313 aa).

Residues Thr-164, Gly-185, Asp-207, and Asn-249 each coordinate S-adenosyl-L-methionine.

It belongs to the methyltransferase superfamily. PrmA family.

It localises to the cytoplasm. It carries out the reaction L-lysyl-[protein] + 3 S-adenosyl-L-methionine = N(6),N(6),N(6)-trimethyl-L-lysyl-[protein] + 3 S-adenosyl-L-homocysteine + 3 H(+). Its function is as follows. Methylates ribosomal protein L11. The polypeptide is Ribosomal protein L11 methyltransferase (Clostridium botulinum (strain Alaska E43 / Type E3)).